Reading from the N-terminus, the 338-residue chain is Pseudouridylate synthase TRUB1 (338 aa).

At Ala2 the chain carries N-acetylalanine. The active-site Nucleophile is Asp109.

It belongs to the pseudouridine synthase TruB family.

It localises to the nucleus. Its subcellular location is the cytoplasm. The protein localises to the cytosol. The enzyme catalyses a uridine in mRNA = a pseudouridine in mRNA. The catalysed reaction is a uridine in tRNA = a pseudouridine in tRNA. It carries out the reaction uridine(55) in tRNA = pseudouridine(55) in tRNA. Its function is as follows. Pseudouridine synthase that catalyzes pseudouridylation of mRNAs and tRNAs. Mediates pseudouridylation of mRNAs with the consensus sequence 5'-GUUCNANNC-3', harboring a stem-loop structure. Constitutes the major pseudouridine synthase acting on mRNAs. Also catalyzes pseudouridylation of some tRNAs, including synthesis of pseudouridine(55) from uracil-55, in the psi GC loop of a subset of tRNAs. Promotes the processing of pri-let-7 microRNAs (pri-miRNAs) independently of its RNA pseudouridylate synthase activity. Acts by binding to the stem-loop structure on pri-let-7, preventing LIN28-binding (LIN28A and/or LIN28B), thereby enhancing the interaction between pri-let-7 and the microprocessor DGCR8, which mediates miRNA maturation. In Mus musculus (Mouse), this protein is Pseudouridylate synthase TRUB1.